Reading from the N-terminus, the 324-residue chain is tRNA-modifying protein YgfZ (324 aa).

A folate-binding site is contributed by Trp-184.

The protein belongs to the tRNA-modifying YgfZ family.

It localises to the cytoplasm. Folate-binding protein involved in regulating the level of ATP-DnaA and in the modification of some tRNAs. It is probably a key factor in regulatory networks that act via tRNA modification, such as initiation of chromosomal replication. In Vibrio vulnificus (strain YJ016), this protein is tRNA-modifying protein YgfZ.